The sequence spans 253 residues: Uracil-DNA glycosylase (253 aa).

The active-site Proton acceptor is the Asp-79.

Belongs to the uracil-DNA glycosylase (UDG) superfamily. UNG family.

It localises to the cytoplasm. It catalyses the reaction Hydrolyzes single-stranded DNA or mismatched double-stranded DNA and polynucleotides, releasing free uracil.. Functionally, excises uracil residues from the DNA which can arise as a result of misincorporation of dUMP residues by DNA polymerase or due to deamination of cytosine. The chain is Uracil-DNA glycosylase from Xylella fastidiosa (strain M23).